The primary structure comprises 351 residues: tRNA pseudouridine synthase D (351 aa).

Catalysis depends on Asp-81, which acts as the Nucleophile. Residues 158–304 (GVPNYFGSQR…MRHERRAIEL (147 aa)) enclose the TRUD domain.

The protein belongs to the pseudouridine synthase TruD family.

The catalysed reaction is uridine(13) in tRNA = pseudouridine(13) in tRNA. In terms of biological role, responsible for synthesis of pseudouridine from uracil-13 in transfer RNAs. The sequence is that of tRNA pseudouridine synthase D from Aliivibrio fischeri (strain MJ11) (Vibrio fischeri).